Here is a 329-residue protein sequence, read N- to C-terminus: PDZ and LIM domain protein 1 (329 aa).

T2 carries the N-acetylthreonine modification. Residues 3–85 (TQQIDLQGPG…NLTLTVARSE (83 aa)) form the PDZ domain. 2 positions are modified to phosphoserine: S90 and S130. Phosphotyrosine is present on Y144. The LIM zinc-binding domain maps to 258–317 (PMCDKCGTGIVGVFVKLRDRHRHPECYVCTDCGTNLKQKGHFFVEDQIYCEKHARERVTP). Zn(2+) is bound by residues C260, C263, H280, C283, C286, C289, C307, and H310. At T316 the chain carries Phosphothreonine. A Phosphotyrosine modification is found at Y321.

In terms of assembly, interacts with ACTN1, ACTN2 and ACTN4. Interacts with PDLIM4. In terms of tissue distribution, strongly expressed in the heart and skeletal muscle, moderately expressed in the spleen, small intestine, colon, placenta, and lung. A lower level expression is seen in liver, thymus, kidney, prostate and pancreas and is not found in the brain, testis, ovary, and peripheral blood leukocytes.

The protein localises to the cytoplasm. It localises to the cytoskeleton. The protein resides in the myofibril. Its subcellular location is the sarcomere. It is found in the z line. Its function is as follows. Cytoskeletal protein that may act as an adapter that brings other proteins (like kinases) to the cytoskeleton. Involved in assembly, disassembly and directioning of stress fibers in fibroblasts. Required for the localization of ACTN1 and PALLD to stress fibers. Required for cell migration and in maintaining cell polarity of fibroblasts. The chain is PDZ and LIM domain protein 1 (PDLIM1) from Homo sapiens (Human).